Consider the following 330-residue polypeptide: DNA-directed RNA polymerase subunit alpha (330 aa).

The alpha N-terminal domain (alpha-NTD) stretch occupies residues 1–236 (MQNSVIEFLK…EQLEAFIDLR (236 aa)). Residues 250-330 (FDPILLRLVD…NWPPTNILDN (81 aa)) are alpha C-terminal domain (alpha-CTD).

The protein belongs to the RNA polymerase alpha chain family. As to quaternary structure, homodimer. The RNAP catalytic core consists of 2 alpha, 1 beta, 1 beta' and 1 omega subunit. When a sigma factor is associated with the core the holoenzyme is formed, which can initiate transcription.

The catalysed reaction is RNA(n) + a ribonucleoside 5'-triphosphate = RNA(n+1) + diphosphate. Its function is as follows. DNA-dependent RNA polymerase catalyzes the transcription of DNA into RNA using the four ribonucleoside triphosphates as substrates. In Blochmanniella pennsylvanica (strain BPEN), this protein is DNA-directed RNA polymerase subunit alpha.